Consider the following 102-residue polypeptide: Large ribosomal subunit protein eL31 (102 aa).

This sequence belongs to the eukaryotic ribosomal protein eL31 family.

The protein is Large ribosomal subunit protein eL31 of Staphylothermus marinus (strain ATCC 43588 / DSM 3639 / JCM 9404 / F1).